Here is an 894-residue protein sequence, read N- to C-terminus: Alanine--tRNA ligase (894 aa).

His569, His573, Cys683, and His687 together coordinate Zn(2+).

The protein belongs to the class-II aminoacyl-tRNA synthetase family. It depends on Zn(2+) as a cofactor.

The protein localises to the cytoplasm. It catalyses the reaction tRNA(Ala) + L-alanine + ATP = L-alanyl-tRNA(Ala) + AMP + diphosphate. Catalyzes the attachment of alanine to tRNA(Ala) in a two-step reaction: alanine is first activated by ATP to form Ala-AMP and then transferred to the acceptor end of tRNA(Ala). Also edits incorrectly charged Ser-tRNA(Ala) and Gly-tRNA(Ala) via its editing domain. In Chloroflexus aurantiacus (strain ATCC 29366 / DSM 635 / J-10-fl), this protein is Alanine--tRNA ligase.